Consider the following 323-residue polypeptide: Ribosomal protein L11 methyltransferase (323 aa).

S-adenosyl-L-methionine is bound by residues Thr160, Gly184, Asp206, and Asn257.

The protein belongs to the methyltransferase superfamily. PrmA family.

Its subcellular location is the cytoplasm. It catalyses the reaction L-lysyl-[protein] + 3 S-adenosyl-L-methionine = N(6),N(6),N(6)-trimethyl-L-lysyl-[protein] + 3 S-adenosyl-L-homocysteine + 3 H(+). Methylates ribosomal protein L11. The protein is Ribosomal protein L11 methyltransferase of Agathobacter rectalis (strain ATCC 33656 / DSM 3377 / JCM 17463 / KCTC 5835 / VPI 0990) (Eubacterium rectale).